The sequence spans 312 residues: Acetaldehyde dehydrogenase 4 (312 aa).

12 to 15 contacts NAD(+); the sequence is SGNI. Cys132 functions as the Acyl-thioester intermediate in the catalytic mechanism. NAD(+) is bound by residues 163 to 171 and Asn290; that span reads SAGPGTRAN.

Belongs to the acetaldehyde dehydrogenase family.

The enzyme catalyses acetaldehyde + NAD(+) + CoA = acetyl-CoA + NADH + H(+). This chain is Acetaldehyde dehydrogenase 4, found in Azotobacter vinelandii (strain DJ / ATCC BAA-1303).